The following is a 597-amino-acid chain: Putative Xaa-Pro dipeptidyl-peptidase (597 aa).

Catalysis depends on charge relay system residues serine 224, aspartate 336, and histidine 367.

Belongs to the peptidase S15 family.

It carries out the reaction Hydrolyzes Xaa-Pro-|- bonds to release unblocked, N-terminal dipeptides from substrates including Ala-Pro-|-p-nitroanilide and (sequentially) Tyr-Pro-|-Phe-Pro-|-Gly-Pro-|-Ile.. This Bacillus anthracis protein is Putative Xaa-Pro dipeptidyl-peptidase.